A 393-amino-acid chain; its full sequence is Sulfate adenylyltransferase (393 aa).

It belongs to the sulfate adenylyltransferase family.

It catalyses the reaction sulfate + ATP + H(+) = adenosine 5'-phosphosulfate + diphosphate. It functions in the pathway sulfur metabolism; hydrogen sulfide biosynthesis; sulfite from sulfate: step 1/3. This chain is Sulfate adenylyltransferase, found in Synechococcus sp. (strain JA-3-3Ab) (Cyanobacteria bacterium Yellowstone A-Prime).